The primary structure comprises 287 residues: Aspartate dehydrogenase domain-containing protein (287 aa).

A phosphoserine mark is found at Ser24 and Ser172.

This sequence belongs to the L-aspartate dehydrogenase family.

This Mus musculus (Mouse) protein is Aspartate dehydrogenase domain-containing protein.